The sequence spans 166 residues: AP-3 complex subunit sigma (166 aa).

Belongs to the adaptor complexes small subunit family. As to quaternary structure, adaptor protein complex 3 (AP-3) is a heterotetramer composed of two large adaptins (delta-type subunit and beta-type subunit), a medium adaptin (mu-type subunit) and a small adaptin (sigma-type subunit).

The protein localises to the cytoplasm. It localises to the golgi apparatus. It is found in the cytoplasmic vesicle membrane. Part of the AP-3 complex, an adaptor-related complex which seems to be clathrin-associated. The complex is associated with the Golgi region as well as more peripheral structures. It facilitates the budding of vesicles from the Golgi membrane and may be directly involved in trafficking to the vacuole. It also function in maintaining the identity of lytic vacuoles and in regulating the transition between storage and lytic vacuoles. The chain is AP-3 complex subunit sigma from Arabidopsis thaliana (Mouse-ear cress).